We begin with the raw amino-acid sequence, 352 residues long: Selenide, water dikinase (352 aa).

Residue Cys23 is part of the active site. ATP contacts are provided by residues Lys26 and 54 to 56; that span reads SRD. Asp57 is a Mg(2+) binding site. Residues Asp74, Asp97, and 145 to 147 contribute to the ATP site; that span reads GHS. Asp97 serves as a coordination point for Mg(2+). Asp233 contacts Mg(2+).

The protein belongs to the selenophosphate synthase 1 family. Class I subfamily. Homodimer. Mg(2+) serves as cofactor.

The catalysed reaction is hydrogenselenide + ATP + H2O = selenophosphate + AMP + phosphate + 2 H(+). Synthesizes selenophosphate from selenide and ATP. The sequence is that of Selenide, water dikinase from Shewanella baltica (strain OS223).